The primary structure comprises 490 residues: Sushi domain-containing protein 4 (490 aa).

The tract at residues Met-1–Gln-20 is disordered. An N-terminal signal peptide occupies residues Met-1 to Cys-41. The Extracellular segment spans residues Phe-42–Thr-319. Sushi domains follow at residues Asn-55–Gln-119, Glu-120–Gly-179, Gln-178–Ala-239, and Glu-241–Lys-304. 8 cysteine pairs are disulfide-bonded: Cys-57/Cys-99, Cys-85/Cys-117, Cys-122/Cys-165, Cys-147/Cys-177, Cys-180/Cys-224, Cys-210/Cys-237, Cys-243/Cys-289, and Cys-274/Cys-302. Asn-104 and Asn-134 each carry an N-linked (GlcNAc...) asparagine glycan. Asn-192 carries N-linked (GlcNAc...) asparagine glycosylation. Residues Trp-320 to Ala-340 form a helical membrane-spanning segment. Over Arg-341–Pro-490 the chain is Cytoplasmic. The tract at residues Tyr-394–Pro-490 is disordered. Composition is skewed to polar residues over residues Cys-430–Tyr-444 and Asp-461–Pro-475. Positions Ile-479–Pro-490 are enriched in acidic residues.

In terms of tissue distribution, high expression in brain and eye, with weaker expression in spinal cord and testis. Detected in white matter of brain and in the outer segments of photoreceptors.

It is found in the membrane. Acts as a complement inhibitor by disrupting the formation of the classical C3 convertase. Isoform 3 inhibits the classical complement pathway, while membrane-bound isoform 1 inhibits deposition of C3b via both the classical and alternative complement pathways. This chain is Sushi domain-containing protein 4 (Susd4), found in Mus musculus (Mouse).